The sequence spans 127 residues: Glycine cleavage system H protein (127 aa).

A Lipoyl-binding domain is found at 22–104 (TVRIGITDFA…YDKAWMIVIE (83 aa)). Lys63 bears the N6-lipoyllysine mark.

It belongs to the GcvH family. In terms of assembly, the glycine cleavage system is composed of four proteins: P, T, L and H. Requires (R)-lipoate as cofactor.

The glycine cleavage system catalyzes the degradation of glycine. The H protein shuttles the methylamine group of glycine from the P protein to the T protein. Its function is as follows. Is also involved in protein lipoylation via its role as an octanoyl/lipoyl carrier protein intermediate. This Anoxybacillus flavithermus (strain DSM 21510 / WK1) protein is Glycine cleavage system H protein.